The following is a 186-amino-acid chain: Ribosomal RNA small subunit methyltransferase G (186 aa).

S-adenosyl-L-methionine-binding positions include Gly59, Phe64, 110 to 111 (IE), and Arg124.

The protein belongs to the methyltransferase superfamily. RNA methyltransferase RsmG family.

Its subcellular location is the cytoplasm. It catalyses the reaction guanosine(527) in 16S rRNA + S-adenosyl-L-methionine = N(7)-methylguanosine(527) in 16S rRNA + S-adenosyl-L-homocysteine. Specifically methylates the N7 position of guanine in position 527 of 16S rRNA. In Campylobacter curvus (strain 525.92), this protein is Ribosomal RNA small subunit methyltransferase G.